The primary structure comprises 618 residues: Serine/threonine-protein kinase pkn1 (618 aa).

Residues 15 to 381 (YKILCYLRKG…KEEVKPQPLF (367 aa)) form the Protein kinase domain. ATP is bound by residues 21–29 (LRKGLWCQD) and Lys44.

This sequence belongs to the protein kinase superfamily. Ser/Thr protein kinase family. In terms of processing, autophosphorylated on serine and threonine residues.

It carries out the reaction L-seryl-[protein] + ATP = O-phospho-L-seryl-[protein] + ADP + H(+). It catalyses the reaction L-threonyl-[protein] + ATP = O-phospho-L-threonyl-[protein] + ADP + H(+). In terms of biological role, together with the serine/threonine kinase PknD, may play a role in the specific interactions with host proteins during intracellular growth. This chain is Serine/threonine-protein kinase pkn1 (pkn1), found in Chlamydia caviae (strain ATCC VR-813 / DSM 19441 / 03DC25 / GPIC) (Chlamydophila caviae).